A 565-amino-acid polypeptide reads, in one-letter code: Efflux pump aunC (565 aa).

A compositionally biased stretch (polar residues) spans 1–14; sequence MSDTARISGGSFTS. The tract at residues 1 to 57 is disordered; sequence MSDTARISGGSFTSPPGRDVELNSFKEASQTRLYPYSSRKEEEGREDEQQRPEREED. Positions 38 to 54 are enriched in basic and acidic residues; the sequence is SRKEEEGREDEQQRPER. Helical transmembrane passes span 59–79, 103–123, 128–148, 164–184, 194–214, 222–242, 257–277, 293–313, 335–355, 378–398, 399–419, 425–445, 457–477, and 530–550; these read GALT…CIFC, DVGW…LPFG, FFPI…GSFI, VAGL…TQCV, GFIM…GGAF, WCFY…FFTF, AAGL…CLLL, IIAL…LQLW, LYGF…PIWF, VIFA…GPFM, LLSA…HPSS, IGYQ…PVFV, TATA…VSVA, and VHTF…ATVI.

It belongs to the major facilitator superfamily. TCR/Tet family.

It is found in the cell membrane. Efflux pump; part of the gene cluster that mediates the biosynthesis of aurasperone B, a dimeric gamma-naphthopyrone. In Aspergillus niger (strain ATCC MYA-4892 / CBS 513.88 / FGSC A1513), this protein is Efflux pump aunC.